An 884-amino-acid chain; its full sequence is Alanine--tRNA ligase (884 aa).

Zn(2+) is bound by residues histidine 572, histidine 576, cysteine 673, and histidine 677.

The protein belongs to the class-II aminoacyl-tRNA synthetase family. It depends on Zn(2+) as a cofactor.

The protein localises to the cytoplasm. It catalyses the reaction tRNA(Ala) + L-alanine + ATP = L-alanyl-tRNA(Ala) + AMP + diphosphate. Catalyzes the attachment of alanine to tRNA(Ala) in a two-step reaction: alanine is first activated by ATP to form Ala-AMP and then transferred to the acceptor end of tRNA(Ala). Also edits incorrectly charged Ser-tRNA(Ala) and Gly-tRNA(Ala) via its editing domain. The polypeptide is Alanine--tRNA ligase (Xylella fastidiosa (strain M23)).